Reading from the N-terminus, the 269-residue chain is Probable 3-deoxy-manno-octulosonic acid transferase (269 aa).

The protein localises to the cytoplasm. The catalysed reaction is an alpha-Kdo-(2-&gt;4)-alpha-Kdo-(2-&gt;6)-lipid IVA + CMP-3-deoxy-beta-D-manno-octulosonate = an alpha-Kdo-(2-&gt;4)-alpha-Kdo-(2-&gt;4)-alpha-Kdo-(2-&gt;6)-lipid IVA + CMP + H(+). The protein operates within bacterial outer membrane biogenesis; LPS core biosynthesis. Involved in the biosynthesis of the core oligosaccharide region of lipopolysaccharide (LPS). Required for the addition of 3-deoxy-D-manno-oct-2-ulosonic acid III (KdoIII) to the KdoII residue of the inner lipopolysaccharide core. The protein is Probable 3-deoxy-manno-octulosonic acid transferase of Salmonella typhimurium (strain LT2 / SGSC1412 / ATCC 700720).